The following is a 515-amino-acid chain: Cytochrome P450 monooxygenase mfmA (515 aa).

Residues 3–23 (KISIIPIVGVALSLAIILQLG) traverse the membrane as a helical segment. Cys453 contributes to the heme binding site.

It belongs to the cytochrome P450 family. Heme serves as cofactor.

It localises to the membrane. It participates in secondary metabolite biosynthesis; terpenoid biosynthesis. Cytochrome P450 monooxygenase; part of the gene cluster that mediates the biosynthesis of the phthalide-terpenoid hybrid 11'-O-desmethylfendlerol. Within the pathway, mfma and mfmC act together to convert 3,5-dimethylorsellinic acid (DMOA) into the phthalide 5,7-dihydroxy-4-(hydroxymethyl)-6-methylphthalide. MfmA performs especially an hydroxylation at C-9. The biosynthesis of 11'-O-desmethylfendlerol begins with the NR-PKS mfmB that forms 3,5-dimethylorsellinic acid (DMOA), which is then transformed into the phthalide 5,7-dihydroxy-4-(hydroxymethyl)-6-methylphthalide by the cytochrome P450 monooxygenase mfmA and the hydrolase mfmC. Subsequently, the methyltransferase mfmE catalyzes 7-O-methylation to yield 5-hydroxy-4-(hydroxymethyl)-7-methoxy-6-methylphthalide, which undergoes C-3 hydroxylation by the cytochrome P450 monooxygenase mfmF. The resultant cyclopolic acid (2,5-dihydroxy-4-(hydroxymethyl)-7-methoxy-6-methylphthalide) is then farnesylated by the DMATS-type prenyltransferase mfmD to afford 5-O-farnesylcyclopolic acid. Finally, the Pyr4-family terpene cyclase mfmH cyclizes the farnesyl moiety of 5-O-farnesylcyclopolic acid into a drimane-like structure, thus completing the biosynthesis of 11'-O-desmethylfendlerol. The protein is Cytochrome P450 monooxygenase mfmA of Annulohypoxylon moriforme (Filamentous fungus).